The chain runs to 435 residues: 3-phosphoshikimate 1-carboxyvinyltransferase (435 aa).

3-phosphoshikimate is bound by residues Lys-23, Ser-24, and Arg-28. Lys-23 is a binding site for phosphoenolpyruvate. The phosphoenolpyruvate site is built by Gly-97 and Arg-125. 7 residues coordinate 3-phosphoshikimate: Ser-170, Ser-171, Gln-172, Ser-198, Asp-315, Asn-338, and Lys-342. Gln-172 is a phosphoenolpyruvate binding site. Asp-315 serves as the catalytic Proton acceptor. Residues Arg-346, Arg-388, and Lys-413 each coordinate phosphoenolpyruvate.

It belongs to the EPSP synthase family. Monomer.

It is found in the cytoplasm. The enzyme catalyses 3-phosphoshikimate + phosphoenolpyruvate = 5-O-(1-carboxyvinyl)-3-phosphoshikimate + phosphate. It functions in the pathway metabolic intermediate biosynthesis; chorismate biosynthesis; chorismate from D-erythrose 4-phosphate and phosphoenolpyruvate: step 6/7. Its function is as follows. Catalyzes the transfer of the enolpyruvyl moiety of phosphoenolpyruvate (PEP) to the 5-hydroxyl of shikimate-3-phosphate (S3P) to produce enolpyruvyl shikimate-3-phosphate and inorganic phosphate. The chain is 3-phosphoshikimate 1-carboxyvinyltransferase from Buchnera aphidicola subsp. Cinara cedri (strain Cc).